We begin with the raw amino-acid sequence, 341 residues long: Glycerol-3-phosphate dehydrogenase [NAD(P)+] 1 (341 aa).

Positions 17, 18, 37, and 112 each coordinate NADPH. The sn-glycerol 3-phosphate site is built by Lys112 and Gly140. Position 144 (Ala144) interacts with NADPH. 5 residues coordinate sn-glycerol 3-phosphate: Lys195, Asp248, Ser258, Arg259, and Asn260. Residue Lys195 is the Proton acceptor of the active site. An NADPH-binding site is contributed by Arg259. NADPH is bound by residues Val283 and Glu285.

It belongs to the NAD-dependent glycerol-3-phosphate dehydrogenase family.

Its subcellular location is the cytoplasm. It catalyses the reaction sn-glycerol 3-phosphate + NAD(+) = dihydroxyacetone phosphate + NADH + H(+). The catalysed reaction is sn-glycerol 3-phosphate + NADP(+) = dihydroxyacetone phosphate + NADPH + H(+). It participates in membrane lipid metabolism; glycerophospholipid metabolism. Functionally, catalyzes the reduction of the glycolytic intermediate dihydroxyacetone phosphate (DHAP) to sn-glycerol 3-phosphate (G3P), the key precursor for phospholipid synthesis. The polypeptide is Glycerol-3-phosphate dehydrogenase [NAD(P)+] 1 (Mycobacterium bovis (strain ATCC BAA-935 / AF2122/97)).